We begin with the raw amino-acid sequence, 199 residues long: OPA3-like protein (199 aa).

Residues 98–141 (RSSEKDKKKEEALQNRFKNLEEKLEVQQETINNLTNVIEAIQSS) adopt a coiled-coil conformation.

This sequence belongs to the OPA3 family.

In Dictyostelium discoideum (Social amoeba), this protein is OPA3-like protein.